Reading from the N-terminus, the 104-residue chain is MVKKVTQDNIQSKLALVMRSGKATLGYKSTIKAIRNGTAKLVFISNNCPTVRKSEIEYYASLAQISIHHFVGSNVELGTACGKYHRCSTMAILDAGDSDILKTE.

Belongs to the eukaryotic ribosomal protein eL30 family.

The protein is Large ribosomal subunit protein eL30 (RPL30) of Tetrahymena thermophila (strain SB210).